The primary structure comprises 465 residues: MAP kinase-interacting serine/threonine-protein kinase 1 (465 aa).

The segment covering 1 to 11 (MVSSQKLEKPI) has biased composition (basic and acidic residues). Residues 1–40 (MVSSQKLEKPIEMGSSEPLPIADGDRRRKKKRRGRATDSL) form a disordered region. Position 39 is a phosphoserine (Ser-39). The Protein kinase domain maps to 49–374 (KLTSELLGEG…AAQVLQHPWV (326 aa)). Residues 55–63 (LGEGAYAKV) and Lys-78 contribute to the ATP site. The span at 185-203 (APTSLGSSDPPTSASQVAG) shows a compositional bias: polar residues. Residues 185–204 (APTSLGSSDPPTSASQVAGT) form a disordered region. The active-site Proton acceptor is Asp-211. Phosphoserine occurs at positions 221 and 226. Phosphothreonine is present on residues Thr-250, Thr-255, and Thr-385. Residues 446 to 465 (RRRALAQAGRGEDRSPPTAL) form a disordered region. A compositionally biased stretch (basic and acidic residues) spans 455 to 465 (RGEDRSPPTAL). Phosphoserine is present on Ser-460.

Belongs to the protein kinase superfamily. CAMK Ser/Thr protein kinase family. Interacts with the C-terminal regions of EIF4G1 and EIF4G2. Also binds to dephosphorylated ERK1 and ERK2, and to the p38 kinases. The cofactor is Mg(2+). Dual phosphorylation of Thr-250 and Thr-255 activates the kinase. Phosphorylation of Thr-385 activates the kinase. MAPK3/ERK1 is one of the kinases which activate MKNK1/MNK1. Phosphorylation by PAK2 leads to a reduced phosphorylation of EIF4G1. As to expression, ubiquitous.

It localises to the cytoplasm. Its subcellular location is the nucleus. The catalysed reaction is L-seryl-[protein] + ATP = O-phospho-L-seryl-[protein] + ADP + H(+). It catalyses the reaction L-threonyl-[protein] + ATP = O-phospho-L-threonyl-[protein] + ADP + H(+). Its activity is regulated as follows. Phosphorylated and activated by the p38 kinases and kinases in the Erk pathway. Functionally, may play a role in the response to environmental stress and cytokines. Appears to regulate translation by phosphorylating EIF4E, thus increasing the affinity of this protein for the 7-methylguanosine-containing mRNA cap. This is MAP kinase-interacting serine/threonine-protein kinase 1 (MKNK1) from Homo sapiens (Human).